Here is a 330-residue protein sequence, read N- to C-terminus: DNA-directed RNA polymerase subunit alpha (330 aa).

Positions 1–231 are alpha N-terminal domain (alpha-NTD); sequence MAILAFQKPD…IYHFMLFSDE (231 aa). Residues 253-330 form an alpha C-terminal domain (alpha-CTD) region; the sequence is MRQLLKTKLV…DISKYKLDKE (78 aa).

It belongs to the RNA polymerase alpha chain family. As to quaternary structure, homodimer. The RNAP catalytic core consists of 2 alpha, 1 beta, 1 beta' and 1 omega subunit. When a sigma factor is associated with the core the holoenzyme is formed, which can initiate transcription.

The catalysed reaction is RNA(n) + a ribonucleoside 5'-triphosphate = RNA(n+1) + diphosphate. Its function is as follows. DNA-dependent RNA polymerase catalyzes the transcription of DNA into RNA using the four ribonucleoside triphosphates as substrates. This is DNA-directed RNA polymerase subunit alpha from Phocaeicola vulgatus (strain ATCC 8482 / DSM 1447 / JCM 5826 / CCUG 4940 / NBRC 14291 / NCTC 11154) (Bacteroides vulgatus).